The following is a 155-amino-acid chain: Transcriptional repressor NrdR (155 aa).

A zinc finger lies at 3-34 (CPFCSHFESKVVDSRPTDEGQAIRRRRECVSC). The ATP-cone domain maps to 49–139 (LIVVKKSGNR…VYREFKDINT (91 aa)).

The protein belongs to the NrdR family. It depends on Zn(2+) as a cofactor.

Functionally, negatively regulates transcription of bacterial ribonucleotide reductase nrd genes and operons by binding to NrdR-boxes. The protein is Transcriptional repressor NrdR of Alkaliphilus metalliredigens (strain QYMF).